A 430-amino-acid chain; its full sequence is Isochorismate synthase MenF (430 aa).

K187 (proton acceptor) is an active-site residue. The active-site Proton donor is E237. E281 and E414 together coordinate Mg(2+).

Belongs to the isochorismate synthase family. It depends on Mg(2+) as a cofactor.

The catalysed reaction is chorismate = isochorismate. The protein operates within quinol/quinone metabolism; 1,4-dihydroxy-2-naphthoate biosynthesis; 1,4-dihydroxy-2-naphthoate from chorismate: step 1/7. It functions in the pathway quinol/quinone metabolism; menaquinone biosynthesis. Its function is as follows. Catalyzes the conversion of chorismate to isochorismate. In Haemophilus influenzae (strain ATCC 51907 / DSM 11121 / KW20 / Rd), this protein is Isochorismate synthase MenF.